The primary structure comprises 698 residues: Methionine--tRNA ligase (698 aa).

Positions 18–28 (PYANGDLHVGH) match the 'HIGH' region motif. Zn(2+)-binding residues include C149, C152, C161, and C165. T350 contacts ATP. A disordered region spans residues 567–590 (EAADAGDEEGEDEDEEPPAADLEP). Residues 570-584 (DAGDEEGEDEDEEPP) show a composition bias toward acidic residues. The tRNA-binding domain maps to 600 to 698 (DFQDLDIRVA…EDAEPGTKVQ (99 aa)).

It belongs to the class-I aminoacyl-tRNA synthetase family. MetG type 1 subfamily. In terms of assembly, homodimer. It depends on Zn(2+) as a cofactor.

It localises to the cytoplasm. It catalyses the reaction tRNA(Met) + L-methionine + ATP = L-methionyl-tRNA(Met) + AMP + diphosphate. Functionally, is required not only for elongation of protein synthesis but also for the initiation of all mRNA translation through initiator tRNA(fMet) aminoacylation. The sequence is that of Methionine--tRNA ligase from Natronomonas pharaonis (strain ATCC 35678 / DSM 2160 / CIP 103997 / JCM 8858 / NBRC 14720 / NCIMB 2260 / Gabara) (Halobacterium pharaonis).